The primary structure comprises 509 residues: Aromatase (509 aa).

Heme is bound at residue cysteine 437.

This sequence belongs to the cytochrome P450 family. Heme serves as cofactor.

It is found in the membrane. It carries out the reaction testosterone + 3 reduced [NADPH--hemoprotein reductase] + 3 O2 = 17beta-estradiol + formate + 3 oxidized [NADPH--hemoprotein reductase] + 4 H2O + 4 H(+). The catalysed reaction is androst-4-ene-3,17-dione + 3 reduced [NADPH--hemoprotein reductase] + 3 O2 = estrone + formate + 3 oxidized [NADPH--hemoprotein reductase] + 4 H2O + 4 H(+). Functionally, catalyzes the formation of aromatic C18 estrogens from C19 androgens. The sequence is that of Aromatase (CYP19A1) from Taeniopygia guttata (Zebra finch).